The following is a 388-amino-acid chain: Chorismate synthase (388 aa).

Positions 39 and 45 each coordinate NADP(+). FMN-binding positions include 130 to 132 (RSS), 251 to 252 (NA), glycine 296, 311 to 315 (KPIPT), and arginine 337.

Belongs to the chorismate synthase family. In terms of assembly, homotetramer. It depends on FMNH2 as a cofactor.

The catalysed reaction is 5-O-(1-carboxyvinyl)-3-phosphoshikimate = chorismate + phosphate. It functions in the pathway metabolic intermediate biosynthesis; chorismate biosynthesis; chorismate from D-erythrose 4-phosphate and phosphoenolpyruvate: step 7/7. In terms of biological role, catalyzes the anti-1,4-elimination of the C-3 phosphate and the C-6 proR hydrogen from 5-enolpyruvylshikimate-3-phosphate (EPSP) to yield chorismate, which is the branch point compound that serves as the starting substrate for the three terminal pathways of aromatic amino acid biosynthesis. This reaction introduces a second double bond into the aromatic ring system. In Geobacillus thermodenitrificans (strain NG80-2), this protein is Chorismate synthase.